The chain runs to 246 residues: Mast cell protease 1 (246 aa).

The signal sequence occupies residues 1–18 (MQALLFLLALLWPPEAGA). Positions 19 to 20 (EE) are cleaved as a propeptide — activation peptide. Positions 21–244 (IIGGVESKPH…YVPWINLVIR (224 aa)) constitute a Peptidase S1 domain. A disulfide bond links C50 and C66. Active-site charge relay system residues include H65 and D109. Intrachain disulfides connect C143–C208 and C174–C187. The active-site Charge relay system is S202.

Belongs to the peptidase S1 family. Granzyme subfamily.

This chain is Mast cell protease 1, found in Meriones unguiculatus (Mongolian jird).